Here is a 165-residue protein sequence, read N- to C-terminus: Phosphopantetheine adenylyltransferase (165 aa).

S10 lines the substrate pocket. Residues 10 to 11 (SF) and H18 contribute to the ATP site. K42, T79, and R93 together coordinate substrate. ATP-binding positions include 94 to 96 (GLR), E104, and 129 to 135 (VRPITAT).

The protein belongs to the bacterial CoaD family. As to quaternary structure, homohexamer. The cofactor is Mg(2+).

It localises to the cytoplasm. It carries out the reaction (R)-4'-phosphopantetheine + ATP + H(+) = 3'-dephospho-CoA + diphosphate. It participates in cofactor biosynthesis; coenzyme A biosynthesis; CoA from (R)-pantothenate: step 4/5. Functionally, reversibly transfers an adenylyl group from ATP to 4'-phosphopantetheine, yielding dephospho-CoA (dPCoA) and pyrophosphate. The sequence is that of Phosphopantetheine adenylyltransferase from Rhodopseudomonas palustris (strain HaA2).